The primary structure comprises 407 residues: Formate-dependent phosphoribosylglycinamide formyltransferase (407 aa).

N(1)-(5-phospho-beta-D-ribosyl)glycinamide-binding positions include 28–29 and E88; that span reads EL. ATP-binding positions include R121, K162, 167-172, 202-205, and E210; these read SSGKGQ and EGFI. The ATP-grasp domain maps to 126–320; that stretch reads RLAAEELGVA…EFELHAKAIL (195 aa). Mg(2+)-binding residues include E279 and E291. N(1)-(5-phospho-beta-D-ribosyl)glycinamide is bound by residues D298, K367, and 374 to 375; that span reads RR.

Belongs to the PurK/PurT family. In terms of assembly, homodimer.

It carries out the reaction N(1)-(5-phospho-beta-D-ribosyl)glycinamide + formate + ATP = N(2)-formyl-N(1)-(5-phospho-beta-D-ribosyl)glycinamide + ADP + phosphate + H(+). It functions in the pathway purine metabolism; IMP biosynthesis via de novo pathway; N(2)-formyl-N(1)-(5-phospho-D-ribosyl)glycinamide from N(1)-(5-phospho-D-ribosyl)glycinamide (formate route): step 1/1. Involved in the de novo purine biosynthesis. Catalyzes the transfer of formate to 5-phospho-ribosyl-glycinamide (GAR), producing 5-phospho-ribosyl-N-formylglycinamide (FGAR). Formate is provided by PurU via hydrolysis of 10-formyl-tetrahydrofolate. The protein is Formate-dependent phosphoribosylglycinamide formyltransferase of Herminiimonas arsenicoxydans.